The primary structure comprises 244 residues: UPF0280 protein Msp_1322 (244 aa).

This sequence belongs to the UPF0280 family.

The chain is UPF0280 protein Msp_1322 from Methanosphaera stadtmanae (strain ATCC 43021 / DSM 3091 / JCM 11832 / MCB-3).